We begin with the raw amino-acid sequence, 55 residues long: Ferredoxin (55 aa).

2 consecutive 4Fe-4S ferredoxin-type domains span residues 2-27 (HIITDECISCGACAAECPVEAIHEGT) and 28-55 (GKYEVDADTCIDCGACEAVCPTGAVKAE). 8 residues coordinate [4Fe-4S] cluster: Cys8, Cys11, Cys14, Cys18, Cys37, Cys40, Cys43, and Cys47.

[4Fe-4S] cluster is required as a cofactor.

Functionally, ferredoxins are iron-sulfur proteins that transfer electrons in a wide variety of metabolic reactions. This chain is Ferredoxin, found in Thermoanaerobacterium thermosaccharolyticum (Clostridium thermosaccharolyticum).